Here is a 360-residue protein sequence, read N- to C-terminus: UDP-N-acetylglucosamine--N-acetylmuramyl-(pentapeptide) pyrophosphoryl-undecaprenol N-acetylglucosamine transferase (360 aa).

Residues Thr15–Gly17, Asn127, Arg163, Ser191, Ile249, Ala268–Glu273, and Gln293 each bind UDP-N-acetyl-alpha-D-glucosamine.

It belongs to the glycosyltransferase 28 family. MurG subfamily.

The protein localises to the cell inner membrane. It carries out the reaction di-trans,octa-cis-undecaprenyl diphospho-N-acetyl-alpha-D-muramoyl-L-alanyl-D-glutamyl-meso-2,6-diaminopimeloyl-D-alanyl-D-alanine + UDP-N-acetyl-alpha-D-glucosamine = di-trans,octa-cis-undecaprenyl diphospho-[N-acetyl-alpha-D-glucosaminyl-(1-&gt;4)]-N-acetyl-alpha-D-muramoyl-L-alanyl-D-glutamyl-meso-2,6-diaminopimeloyl-D-alanyl-D-alanine + UDP + H(+). Its pathway is cell wall biogenesis; peptidoglycan biosynthesis. In terms of biological role, cell wall formation. Catalyzes the transfer of a GlcNAc subunit on undecaprenyl-pyrophosphoryl-MurNAc-pentapeptide (lipid intermediate I) to form undecaprenyl-pyrophosphoryl-MurNAc-(pentapeptide)GlcNAc (lipid intermediate II). This is UDP-N-acetylglucosamine--N-acetylmuramyl-(pentapeptide) pyrophosphoryl-undecaprenol N-acetylglucosamine transferase from Proteus mirabilis (strain HI4320).